The chain runs to 539 residues: Nucleoporin NUP60 (539 aa).

Ser-10, Ser-49, Ser-81, and Ser-89 each carry phosphoserine. A disordered region spans residues 44-80; the sequence is DSARVSPRNNVANKQPRNESFNRRISSMPGGYFHSEI. Residues 91–118 are a coiled coil; the sequence is VVSAVGEARNDIENKEEEYDETHETNIS. Phosphoserine is present on residues Ser-162, Ser-171, Ser-214, and Ser-222. Polar residues-rich tracts occupy residues 242–252 and 258–267; these read TANTSAQSIAS and SGVSKSAPSK. 3 disordered regions span residues 242–267, 305–329, and 347–493; these read TANT…APSK, IRKH…TTVK, and NATK…GKHI. Polar residues predominate over residues 347–359; that stretch reads NATKISPSAPSKD. 4 positions are modified to phosphoserine: Ser-352, Ser-360, Ser-374, and Ser-382. Composition is skewed to polar residues over residues 395-433 and 448-485; these read SAFN…TNLQ and GDST…LSQE. FXF repeat units follow at residues 399–401 and 427–429; these read FSF and FNF. Position 460 is a phosphothreonine (Thr-460). The FXF 3 repeat unit spans residues 469–471; sequence FVF. Phosphoserine is present on residues Ser-480 and Ser-483. The FXF 4 repeat unit spans residues 509 to 511; sequence FDF.

In terms of assembly, component of the nuclear pore complex (NPC). NPC constitutes the exclusive means of nucleocytoplasmic transport. NPCs allow the passive diffusion of ions and small molecules and the active, nuclear transport receptor-mediated bidirectional transport of macromolecules such as proteins, RNAs, ribonucleoparticles (RNPs), and ribosomal subunits across the nuclear envelope. Due to its 8-fold rotational symmetry, all subunits are present with 8 copies or multiples thereof. Binds to NUP1 and NUP2 forming the nuclear basket and the distal ring. The interaction with NUP2 is GSP1-GTP-dependent. Interacts through its FG repeats with karyopherins, such as KAP123 and KAP95-SRP1 (KAP60). Also interacts with GSP1-GTP and SRM1 (PRP20), where NUP60 reduces SRM1 activity, thus inhibiting GSP1 guanine nucleotide dissociation. Phosphorylated by CDC28.

Its subcellular location is the nucleus. It localises to the nuclear pore complex. It is found in the nucleus membrane. Functionally, functions as a component of the nuclear pore complex (NPC). NPC components, collectively referred to as nucleoporins (NUPs), can play the role of both NPC structural components and of docking or interaction partners for transiently associated nuclear transport factors. Active directional transport is assured by both, a Phe-Gly (FG) repeat affinity gradient for these transport factors across the NPC and a transport cofactor concentration gradient across the nuclear envelope (GSP1 and GSP2 GTPases associated predominantly with GTP in the nucleus, with GDP in the cytoplasm). In Saccharomyces cerevisiae (strain ATCC 204508 / S288c) (Baker's yeast), this protein is Nucleoporin NUP60 (NUP60).